The following is a 351-amino-acid chain: Riboflavin-binding protein RibY (351 aa).

The first 19 residues, 1-19 (MMKLRVLTLGILIILLITA), serve as a signal peptide directing secretion. C20 carries the N-palmitoyl cysteine lipid modification. A lipid anchor (S-diacylglycerol cysteine) is attached at C20.

The protein belongs to the NMT1 family. As to quaternary structure, the complex is likely composed of an ATP-binding protein, a transmembrane protein (RibX) and a solute-binding protein (RibY).

The protein resides in the cell membrane. Part of an ABC transporter complex that transports riboflavin into the cell. Binds riboflavin. This Chloroflexus aurantiacus (strain ATCC 29366 / DSM 635 / J-10-fl) protein is Riboflavin-binding protein RibY.